Here is a 341-residue protein sequence, read N- to C-terminus: tRNA N6-adenosine threonylcarbamoyltransferase (341 aa).

Fe cation-binding residues include His-111 and His-115. Substrate contacts are provided by residues 134 to 138, Asp-167, Gly-180, and Asn-272; that span reads LVSGG. Asp-300 provides a ligand contact to Fe cation.

It belongs to the KAE1 / TsaD family. Fe(2+) is required as a cofactor.

It is found in the cytoplasm. The catalysed reaction is L-threonylcarbamoyladenylate + adenosine(37) in tRNA = N(6)-L-threonylcarbamoyladenosine(37) in tRNA + AMP + H(+). In terms of biological role, required for the formation of a threonylcarbamoyl group on adenosine at position 37 (t(6)A37) in tRNAs that read codons beginning with adenine. Is involved in the transfer of the threonylcarbamoyl moiety of threonylcarbamoyl-AMP (TC-AMP) to the N6 group of A37, together with TsaE and TsaB. TsaD likely plays a direct catalytic role in this reaction. In Edwardsiella ictaluri (strain 93-146), this protein is tRNA N6-adenosine threonylcarbamoyltransferase.